A 543-amino-acid chain; its full sequence is Formate--tetrahydrofolate ligase (543 aa).

Thr-54–Thr-61 contacts ATP.

Belongs to the formate--tetrahydrofolate ligase family.

It carries out the reaction (6S)-5,6,7,8-tetrahydrofolate + formate + ATP = (6R)-10-formyltetrahydrofolate + ADP + phosphate. It functions in the pathway one-carbon metabolism; tetrahydrofolate interconversion. The polypeptide is Formate--tetrahydrofolate ligase (Thermus thermophilus (strain ATCC BAA-163 / DSM 7039 / HB27)).